Consider the following 195-residue polypeptide: Imidazoleglycerol-phosphate dehydratase (195 aa).

Belongs to the imidazoleglycerol-phosphate dehydratase family.

It localises to the cytoplasm. It catalyses the reaction D-erythro-1-(imidazol-4-yl)glycerol 3-phosphate = 3-(imidazol-4-yl)-2-oxopropyl phosphate + H2O. It functions in the pathway amino-acid biosynthesis; L-histidine biosynthesis; L-histidine from 5-phospho-alpha-D-ribose 1-diphosphate: step 6/9. This Cereibacter sphaeroides (strain ATCC 17025 / ATH 2.4.3) (Rhodobacter sphaeroides) protein is Imidazoleglycerol-phosphate dehydratase.